We begin with the raw amino-acid sequence, 353 residues long: Protein RecA (353 aa).

67–74 provides a ligand contact to ATP; sequence GPESSGKT.

This sequence belongs to the RecA family.

It localises to the cytoplasm. Functionally, can catalyze the hydrolysis of ATP in the presence of single-stranded DNA, the ATP-dependent uptake of single-stranded DNA by duplex DNA, and the ATP-dependent hybridization of homologous single-stranded DNAs. It interacts with LexA causing its activation and leading to its autocatalytic cleavage. This is Protein RecA from Shewanella loihica (strain ATCC BAA-1088 / PV-4).